The chain runs to 195 residues: E3 ubiquitin-protein ligase ZNRF1 (195 aa).

Positions 1-10 are enriched in polar residues; that stretch reads MGGKQSSASR. The segment at 1–37 is disordered; that stretch reads MGGKQSSASRSRAPFPGVSSDDSAVPPSSNFGHFRGG. Residue Gly-2 is the site of N-myristoyl glycine attachment. Residues 18–29 are compositionally biased toward low complexity; sequence VSSDDSAVPPSS. An RING-type; atypical zinc finger spans residues 152–193; the sequence is CVICLEELSQGDTIARLPCLCIYHKSCIDSWFEVNRCCPEHP.

It is found in the endosome. The protein localises to the lysosome. Its subcellular location is the membrane. The enzyme catalyses S-ubiquitinyl-[E2 ubiquitin-conjugating enzyme]-L-cysteine + [acceptor protein]-L-lysine = [E2 ubiquitin-conjugating enzyme]-L-cysteine + N(6)-ubiquitinyl-[acceptor protein]-L-lysine.. It participates in protein modification; protein ubiquitination. E3 ubiquitin-protein ligase that plays a role in neuron cells differentiation. Plays a role in the establishment and maintenance of neuronal transmission and plasticity. The polypeptide is E3 ubiquitin-protein ligase ZNRF1 (znrf1) (Xenopus laevis (African clawed frog)).